Consider the following 447-residue polypeptide: GTPase Der (447 aa).

EngA-type G domains lie at 3–167 and 180–353; these read PVVA…HLED and IKLA…KAAN. GTP-binding positions include 9–16, 56–60, 119–122, 186–193, 233–237, and 298–301; these read GRPNVGKS, DTGGF, NKAE, DTAGL, and NKWD. Residues 354–438 enclose the KH-like domain; the sequence is CKMSTPILTR…PMRIEFKSST (85 aa).

The protein belongs to the TRAFAC class TrmE-Era-EngA-EngB-Septin-like GTPase superfamily. EngA (Der) GTPase family. Associates with the 50S ribosomal subunit.

Functionally, GTPase that plays an essential role in the late steps of ribosome biogenesis. This Albidiferax ferrireducens (strain ATCC BAA-621 / DSM 15236 / T118) (Rhodoferax ferrireducens) protein is GTPase Der.